The chain runs to 442 residues: Chromosomal replication initiator protein DnaA (442 aa).

The domain I, interacts with DnaA modulators stretch occupies residues M1–G75. The segment at G75–G104 is domain II. A domain III, AAA+ region region spans residues N105–A322. ATP is bound by residues G150, G152, K153, and T154. The segment at N323–E442 is domain IV, binds dsDNA.

It belongs to the DnaA family. Oligomerizes as a right-handed, spiral filament on DNA at oriC.

It localises to the cytoplasm. Its function is as follows. Plays an essential role in the initiation and regulation of chromosomal replication. ATP-DnaA binds to the origin of replication (oriC) to initiate formation of the DNA replication initiation complex once per cell cycle. Binds the DnaA box (a 9 base pair repeat at the origin) and separates the double-stranded (ds)DNA. Forms a right-handed helical filament on oriC DNA; dsDNA binds to the exterior of the filament while single-stranded (ss)DNA is stabiized in the filament's interior. The ATP-DnaA-oriC complex binds and stabilizes one strand of the AT-rich DNA unwinding element (DUE), permitting loading of DNA polymerase. After initiation quickly degrades to an ADP-DnaA complex that is not apt for DNA replication. Binds acidic phospholipids. This Xanthomonas euvesicatoria pv. vesicatoria (strain 85-10) (Xanthomonas campestris pv. vesicatoria) protein is Chromosomal replication initiator protein DnaA.